The chain runs to 95 residues: Small ribosomal subunit protein uS17 (95 aa).

Belongs to the universal ribosomal protein uS17 family. As to quaternary structure, part of the 30S ribosomal subunit.

One of the primary rRNA binding proteins, it binds specifically to the 5'-end of 16S ribosomal RNA. In Psychrobacter sp. (strain PRwf-1), this protein is Small ribosomal subunit protein uS17.